We begin with the raw amino-acid sequence, 283 residues long: Elongation factor Ts (283 aa).

Positions 80–83 are involved in Mg(2+) ion dislocation from EF-Tu; the sequence is TDFV.

Belongs to the EF-Ts family.

The protein resides in the cytoplasm. Its function is as follows. Associates with the EF-Tu.GDP complex and induces the exchange of GDP to GTP. It remains bound to the aminoacyl-tRNA.EF-Tu.GTP complex up to the GTP hydrolysis stage on the ribosome. In Serratia proteamaculans (strain 568), this protein is Elongation factor Ts.